Here is a 228-residue protein sequence, read N- to C-terminus: FCS-Like Zinc finger 12 (228 aa).

Residues 162 to 205 (DFLTSCCLCKKKLQGKDIYMYKGDEGFCSKECRSLKIMEDSLKE) form an FLZ-type zinc finger.

Belongs to the FLZ family. Interacts with KIN10 and KIN11 via its FLZ-type zinc finger domain. Interacts with KINB1 and KINB2 via its N-terminal part. Forms homodimer and heterodimer with FLZ2 and FLZ10 in vitro.

Functionally, may act as an adapter to facilitate the interaction of SnRK1 complex with effector proteins, conferring tissue- and stimulus-type specific differences in the SnRK1 regulation pathway. The chain is FCS-Like Zinc finger 12 from Arabidopsis thaliana (Mouse-ear cress).